We begin with the raw amino-acid sequence, 514 residues long: Ribonuclease Y (514 aa).

The chain crosses the membrane as a helical span at residues 2–22; sequence EDLIVAIVVGAFSSAISIFVV. Residues 204–268 form the KH domain; that stretch reads LINNIPLNDE…VATKTIRELL (65 aa). In terms of domain architecture, HD spans 330-423; it reads ALAHTLEVAH…VCAADALSAA (94 aa).

This sequence belongs to the RNase Y family.

The protein resides in the cell membrane. In terms of biological role, endoribonuclease that initiates mRNA decay. This is Ribonuclease Y from Aliarcobacter butzleri (strain RM4018) (Arcobacter butzleri).